The chain runs to 441 residues: Deoxyguanosinetriphosphate triphosphohydrolase-like protein (441 aa).

The 194-residue stretch at arginine 62–glycine 255 folds into the HD domain.

It belongs to the dGTPase family. Type 2 subfamily.

The protein is Deoxyguanosinetriphosphate triphosphohydrolase-like protein (dgt) of Vibrio cholerae serotype O1 (strain ATCC 39541 / Classical Ogawa 395 / O395).